A 267-amino-acid polypeptide reads, in one-letter code: Palmitoyltransferase ZDHHC12 (267 aa).

The Cytoplasmic portion of the chain corresponds to 1-9; that stretch reads MAPWALLSP. A helical transmembrane segment spans residues 10–30; the sequence is GVLVRTGHTVLTWGITLVLFL. Over 31–43 the chain is Lumenal; the sequence is HDTELRQWEEQGE. A helical membrane pass occupies residues 44-64; the sequence is LLLPLTFLLLVLGSLLLYLAV. Topologically, residues 65–140 are cytoplasmic; it reads SLMDPGYVNV…ENCVGERNHP (76 aa). Residues 97-147 enclose the DHHC domain; that stretch reads RRCRYCLVLQPLRARHCRECRRCVRRYDHHCPWMENCVGERNHPLFVVYLA. Cys127 serves as the catalytic S-palmitoyl cysteine intermediate. Residues 141–161 traverse the membrane as a helical segment; it reads LFVVYLALQLVVLLWGLYLAW. The Lumenal portion of the chain corresponds to 162-178; it reads SGLRFFQPWGQWLRSSG. A helical transmembrane segment spans residues 179-199; that stretch reads LLFATFLLLSLFSLVASLLLV. Topologically, residues 200–267 are cytoplasmic; sequence SHLYLVASNT…EEEEGSSPAV (68 aa).

It belongs to the DHHC palmitoyltransferase family. In terms of tissue distribution, widely expressed.

The protein localises to the golgi apparatus membrane. It is found in the endoplasmic reticulum membrane. The enzyme catalyses L-cysteinyl-[protein] + hexadecanoyl-CoA = S-hexadecanoyl-L-cysteinyl-[protein] + CoA. In terms of biological role, palmitoyltransferase that catalyzes the addition of palmitate onto various protein substrates. Has a palmitoyltransferase activity toward gephyrin/GPHN, regulating its clustering at synapses and its function in gamma-aminobutyric acid receptor clustering. Thereby, indirectly regulates GABAergic synaptic transmission. Negatively regulates NLRP3-driven inflammation. Catalyzes NLRP3 palmitoylation, leading to its degradation via the chaperone-mediated autophagy (CMA) process. In Homo sapiens (Human), this protein is Palmitoyltransferase ZDHHC12.